Here is a 508-residue protein sequence, read N- to C-terminus: Bifunctional purine biosynthesis protein PurH (508 aa).

Residues 1–145 (MAKKALISVS…KNYKYVTILV (145 aa)) enclose the MGS-like domain.

The protein belongs to the PurH family.

It carries out the reaction (6R)-10-formyltetrahydrofolate + 5-amino-1-(5-phospho-beta-D-ribosyl)imidazole-4-carboxamide = 5-formamido-1-(5-phospho-D-ribosyl)imidazole-4-carboxamide + (6S)-5,6,7,8-tetrahydrofolate. The enzyme catalyses IMP + H2O = 5-formamido-1-(5-phospho-D-ribosyl)imidazole-4-carboxamide. The protein operates within purine metabolism; IMP biosynthesis via de novo pathway; 5-formamido-1-(5-phospho-D-ribosyl)imidazole-4-carboxamide from 5-amino-1-(5-phospho-D-ribosyl)imidazole-4-carboxamide (10-formyl THF route): step 1/1. It participates in purine metabolism; IMP biosynthesis via de novo pathway; IMP from 5-formamido-1-(5-phospho-D-ribosyl)imidazole-4-carboxamide: step 1/1. The protein is Bifunctional purine biosynthesis protein PurH of Thermoanaerobacter sp. (strain X514).